Here is an 86-residue protein sequence, read N- to C-terminus: ATP synthase subunit c (86 aa).

Helical transmembrane passes span 13–33 (FFAT…AGLA) and 63–83 (ILGQ…AFIL).

It belongs to the ATPase C chain family. As to quaternary structure, F-type ATPases have 2 components, F(1) - the catalytic core - and F(0) - the membrane proton channel. F(1) has five subunits: alpha(3), beta(3), gamma(1), delta(1), epsilon(1). F(0) has three main subunits: a(1), b(2) and c(10-14). The alpha and beta chains form an alternating ring which encloses part of the gamma chain. F(1) is attached to F(0) by a central stalk formed by the gamma and epsilon chains, while a peripheral stalk is formed by the delta and b chains.

It localises to the cell membrane. In terms of biological role, f(1)F(0) ATP synthase produces ATP from ADP in the presence of a proton or sodium gradient. F-type ATPases consist of two structural domains, F(1) containing the extramembraneous catalytic core and F(0) containing the membrane proton channel, linked together by a central stalk and a peripheral stalk. During catalysis, ATP synthesis in the catalytic domain of F(1) is coupled via a rotary mechanism of the central stalk subunits to proton translocation. Functionally, key component of the F(0) channel; it plays a direct role in translocation across the membrane. A homomeric c-ring of between 10-14 subunits forms the central stalk rotor element with the F(1) delta and epsilon subunits. The sequence is that of ATP synthase subunit c from Acholeplasma laidlawii (strain PG-8A).